The chain runs to 324 residues: Glyoxylate/hydroxypyruvate reductase B (324 aa).

Residues arginine 237 and glutamate 266 contribute to the active site. Histidine 285 functions as the Proton donor in the catalytic mechanism.

It belongs to the D-isomer specific 2-hydroxyacid dehydrogenase family. GhrB subfamily. As to quaternary structure, homodimer.

Its subcellular location is the cytoplasm. The enzyme catalyses glycolate + NADP(+) = glyoxylate + NADPH + H(+). It catalyses the reaction (R)-glycerate + NAD(+) = 3-hydroxypyruvate + NADH + H(+). The catalysed reaction is (R)-glycerate + NADP(+) = 3-hydroxypyruvate + NADPH + H(+). Catalyzes the NADPH-dependent reduction of glyoxylate and hydroxypyruvate into glycolate and glycerate, respectively. This is Glyoxylate/hydroxypyruvate reductase B from Shigella sonnei (strain Ss046).